We begin with the raw amino-acid sequence, 328 residues long: GTP 3',8-cyclase (328 aa).

In terms of domain architecture, Radical SAM core spans Met-1–Ala-229. Arg-8 serves as a coordination point for GTP. [4Fe-4S] cluster-binding residues include Cys-15 and Cys-19. An S-adenosyl-L-methionine-binding site is contributed by Tyr-21. Position 22 (Cys-22) interacts with [4Fe-4S] cluster. Residue Arg-60 participates in GTP binding. S-adenosyl-L-methionine is bound at residue Gly-64. Thr-91 contributes to the GTP binding site. Position 115 (Ser-115) interacts with S-adenosyl-L-methionine. Lys-155 contributes to the GTP binding site. Met-189 lines the S-adenosyl-L-methionine pocket. Positions 252 and 255 each coordinate [4Fe-4S] cluster. Position 257–259 (Arg-257–Arg-259) interacts with GTP. Cys-269 provides a ligand contact to [4Fe-4S] cluster.

The protein belongs to the radical SAM superfamily. MoaA family. As to quaternary structure, monomer and homodimer. [4Fe-4S] cluster is required as a cofactor.

The enzyme catalyses GTP + AH2 + S-adenosyl-L-methionine = (8S)-3',8-cyclo-7,8-dihydroguanosine 5'-triphosphate + 5'-deoxyadenosine + L-methionine + A + H(+). It functions in the pathway cofactor biosynthesis; molybdopterin biosynthesis. Its function is as follows. Catalyzes the cyclization of GTP to (8S)-3',8-cyclo-7,8-dihydroguanosine 5'-triphosphate. The chain is GTP 3',8-cyclase from Nostoc punctiforme (strain ATCC 29133 / PCC 73102).